We begin with the raw amino-acid sequence, 427 residues long: UDP-N-acetylglucosamine 1-carboxyvinyltransferase 1 (427 aa).

23–24 lines the phosphoenolpyruvate pocket; it reads KN. Position 96 (Arg-96) interacts with UDP-N-acetyl-alpha-D-glucosamine. The active-site Proton donor is the Cys-120. Position 120 is a 2-(S-cysteinyl)pyruvic acid O-phosphothioketal (Cys-120). UDP-N-acetyl-alpha-D-glucosamine-binding positions include 125–129, Asp-309, and Val-331; that span reads RPIDL.

It belongs to the EPSP synthase family. MurA subfamily.

The protein localises to the cytoplasm. It catalyses the reaction phosphoenolpyruvate + UDP-N-acetyl-alpha-D-glucosamine = UDP-N-acetyl-3-O-(1-carboxyvinyl)-alpha-D-glucosamine + phosphate. The protein operates within cell wall biogenesis; peptidoglycan biosynthesis. In terms of biological role, cell wall formation. Adds enolpyruvyl to UDP-N-acetylglucosamine. The chain is UDP-N-acetylglucosamine 1-carboxyvinyltransferase 1 from Streptococcus pneumoniae (strain ATCC BAA-255 / R6).